The sequence spans 346 residues: Rhomboid protein 1, mitochondrial (346 aa).

The N-terminal 73 residues, 1-73, are a transit peptide targeting the mitochondrion; the sequence is MSGVSSVMLG…RFFSQTSILK (73 aa). The next 6 helical transmembrane spans lie at 109–129, 145–165, 203–223, 246–266, 275–295, and 308–328; these read SMTILGLSLMAGIYFGSPYLF, LVYALLGINVAVFGLWQLPKC, MLALWSFGTSLATMLGASNFF, LAIVGPSLGASGALFGVLGCF, ILLFVFPVPGGAWVAFLASVA, and FDYAAHLGGSMMGVLYGWYIS. The Nucleophile role is filled by Ser256. His313 is a catalytic residue.

This sequence belongs to the peptidase S54 family.

Its subcellular location is the mitochondrion inner membrane. The enzyme catalyses Cleaves type-1 transmembrane domains using a catalytic dyad composed of serine and histidine that are contributed by different transmembrane domains.. Its function is as follows. Mitochondrial rhomboid serine protease processing the mitochondrial membrane fusion regulator MGM1, and the cytochrome c peroxidase (CCP1). Required for TIM11 stability, ATP synthase complex assembly, mitochondrial morphology, cytochrome c (CYC1) storage and mitochondrial genome maintenance. In Saccharomyces cerevisiae (strain ATCC 204508 / S288c) (Baker's yeast), this protein is Rhomboid protein 1, mitochondrial (PCP1).